We begin with the raw amino-acid sequence, 910 residues long: Short transient receptor potential channel 3 (910 aa).

A disordered region spans residues Met-1–Ala-93. Residues Met-1 to Phe-448 are Cytoplasmic-facing. Positions Pro-19 to Gly-29 are enriched in acidic residues. Positions Pro-48–Gly-58 are enriched in pro residues. A compositionally biased stretch (low complexity) spans Pro-59–Ser-68. 4 ANK repeats span residues Ala-100 to Val-129, Met-135 to Ile-164, Asp-166 to Ser-192, and Pro-221 to Arg-250. Glu-147 provides a ligand contact to Ca(2+). The chain crosses the membrane as a helical span at residues Val-449 to Ala-466. Over Ser-467–Thr-497 the chain is Extracellular. Asn-478 carries an N-linked (GlcNAc...) asparagine glycan. The chain crosses the membrane as a helical span at residues Trp-498–Lys-516. 3 residues coordinate Ca(2+): Glu-514, Glu-517, and Asn-532. Over Glu-517 to Gln-529 the chain is Cytoplasmic. A helical membrane pass occupies residues Leu-530 to Leu-551. The Extracellular segment spans residues Ala-552–Asp-595. A helical transmembrane segment spans residues Pro-596–Leu-619. At Pro-620–Asp-638 the chain is on the cytoplasmic side. Residues Glu-623 to Ala-652 form an ANK 5 repeat. The chain crosses the membrane as a helical span at residues Ile-639–Ser-662. The Extracellular segment spans residues Tyr-663–His-702. A helical transmembrane segment spans residues Lys-703–Leu-728. At Ile-729–Glu-910 the chain is on the cytoplasmic side. Residues Glu-860, Glu-863, Glu-865, and Asp-872 each coordinate Ca(2+).

The protein belongs to the transient receptor (TC 1.A.4) family. STrpC subfamily. TRPC3 sub-subfamily. In terms of assembly, homotetramer. Interacts with ITPR1, ITPR3, MX1 and RNF24. Interacts with JPH2; the interaction is involved in maintaining Ca(2+) homeostasis in skeletal muscle and is mediated by JPH2 'Ser-165' phosphorylation. As to expression, abundantly expressed in brain. Concentrated in cerebellar Purkinje cells and sparsely localized in cerebellar granule lyer, pontine nuclei and thalamus. Lower levels detected in other tissues.

It is found in the cell membrane. The enzyme catalyses Ca(2+)(in) = Ca(2+)(out). With respect to regulation, activated by diacylglycerol (DAG) in a membrane-delimited fashion, independently of protein kinase C. Activated by inositol 1,4,5-triphosphate receptors (ITPR) with bound IP3. May be activated by internal calcium store depletion. Inhibited by intracellular Ca(2+). Functionally, forms a receptor-activated non-selective calcium permeant cation channel. May be operated by a phosphatidylinositol second messenger system activated by receptor tyrosine kinases or G-protein coupled receptors. This chain is Short transient receptor potential channel 3 (Trpc3), found in Mus musculus (Mouse).